The sequence spans 503 residues: MAEGSQSAPEAGNDMGNDDAIGGNVSKYIVLPTGYCGQPKKGHLIFDACFESGNLGRVDQVSEFEYDLFIRPDTCNPRFRVWFNFTVENVKESQRVIFNIVNFSKTKSLYRDGMAPMVKSTSRPKWQRLPPKNVYYYRCPDHRKNYVMSFAFCFDREEDIYQFAYCYPYTYTRFQHYLDSLQKRNMDYFFREQLGQSVQQRKLDLLTITSPDNLREGAEQKVVFITGRVHPGETPSSFVCQGIIDFLVSQHPIACVLREYLVFKIAPMLNPDGVYLGNYRCSLMGFDLNRHWLDPSPWVHPTLHGVKQLIVQMYNDPKTSLEFYIDIHAHSTMMNGFMYGNIFEDEERFQRQAIFPKLLCQNAEDFSYSSTSFNRDAVKAGTGRRFLGGLLDHTSYCYTLEVSFYSYIISGTTAAVPYTEEAYMKLGRNVARTFLDYYRLNPVVEKVAIPMPRLRNKEIEVQRRKEKSPPYKHPLLRGPASNYPNSKGDKKSSVNHKDPSTPF.

A Peptidase M14 domain is found at 167-438 (YPYTYTRFQH…NVARTFLDYY (272 aa)). Zn(2+)-binding residues include His230, Glu233, and His328. Catalysis depends on Glu401, which acts as the Proton donor/acceptor. 2 stretches are compositionally biased toward basic and acidic residues: residues 459 to 469 (IEVQRRKEKSP) and 487 to 503 (KGDK…STPF). The disordered stretch occupies residues 459-503 (IEVQRRKEKSPPYKHPLLRGPASNYPNSKGDKKSSVNHKDPSTPF).

It belongs to the peptidase M14 family. As to quaternary structure, interacts with MYLK. Requires Zn(2+) as cofactor.

Its subcellular location is the cytoplasm. The protein localises to the cytosol. It localises to the cytoskeleton. It is found in the microtubule organizing center. The protein resides in the centrosome. Its subcellular location is the centriole. The protein localises to the golgi apparatus. It localises to the cilium basal body. It carries out the reaction (L-glutamyl)(n+1)-gamma-L-glutamyl-L-glutamyl-[protein] + H2O = (L-glutamyl)(n)-gamma-L-glutamyl-L-glutamyl-[protein] + L-glutamate. The enzyme catalyses C-terminal L-alpha-aminoacyl-L-glutamyl-L-glutamyl-[tubulin] + H2O = C-terminal L-alpha-aminoacyl-L-glutamyl-[tubulin] + L-glutamate. In terms of biological role, metallocarboxypeptidase that mediates protein deglutamylation of tubulin and non-tubulin target proteins. Catalyzes the removal of polyglutamate side chains present on the gamma-carboxyl group of glutamate residues within the C-terminal tail of tubulin protein. Specifically cleaves tubulin long-side-chains, while it is not able to remove the branching point glutamate. Also catalyzes the removal of polyglutamate residues from the carboxy-terminus of non-tubulin proteins such as MYLK. Mediates the deglutamylation of nucleotidyltransferase CGAS, leading to CGAS antiviral defense response activation. Involved in KLF4 deglutamylation which promotes KLF4 proteasome-mediated degradation, thereby negatively regulating cell pluripotency maintenance and embryogenesis. The sequence is that of Cytosolic carboxypeptidase 6 from Homo sapiens (Human).